Consider the following 243-residue polypeptide: Protein YagJ (243 aa).

This chain is Protein YagJ (yagJ), found in Escherichia coli (strain K12).